Here is a 98-residue protein sequence, read N- to C-terminus: Putative protein adenylyltransferase MJ0126 (98 aa).

The short motif at 31–45 (GSYARNEQTETSDID) is the GSX(10)DXD motif element. Asp43, Asp45, and Asp75 together coordinate Mg(2+).

This sequence belongs to the MntA antitoxin family. As to quaternary structure, probably forms a complex with cognate toxin MJ0125. It depends on Mg(2+) as a cofactor.

It carries out the reaction L-tyrosyl-[protein] + ATP = O-(5'-adenylyl)-L-tyrosyl-[protein] + diphosphate. It catalyses the reaction O-(5'-adenylyl)-L-tyrosyl-[protein] + ATP = O-[5'-(adenylyl-(5'-&gt;3')-adenylyl)]-L-tyrosyl-[protein] + diphosphate. Its function is as follows. Probable antitoxin component of a putative type VII toxin-antitoxin (TA) system. Neutralizes cognate toxic MJ0125 by di-AMPylation. The polypeptide is Putative protein adenylyltransferase MJ0126 (Methanocaldococcus jannaschii (strain ATCC 43067 / DSM 2661 / JAL-1 / JCM 10045 / NBRC 100440) (Methanococcus jannaschii)).